The chain runs to 138 residues: Acidic phospholipase A2 inhibitor chain HPD-1I (138 aa).

The signal sequence occupies residues 1–16 (MRTLWIVAVCLIGVEG). 7 cysteine pairs are disulfide-bonded: cysteine 42–cysteine 131, cysteine 44–cysteine 60, cysteine 59–cysteine 111, cysteine 65–cysteine 138, cysteine 66–cysteine 104, cysteine 73–cysteine 97, and cysteine 91–cysteine 102.

As to quaternary structure, heterodimer of an acidic and a basic chain; non-covalently linked. The basic chain is toxic and has phospholipase A2 activity (chain HDP-1P (AC Q1RP79) or HDP-2P (AC Q1RP78)) and the acidic chain is non-toxic and functions as its inhibitor (chain HPD-1I). In terms of tissue distribution, expressed by the venom gland.

It localises to the secreted. Heterodimer: slightly affects neuromuscular transmission acting presynaptically. It has a low catalytic activity, a low anticoagulant activity and weakly inhibits ADP-induced platelet aggregation. Functionally, monomer: has no activity (neurotoxic, catalytic, anticoagulant and a ADP-induced platelet aggregation), but inhibits phospholipase A2. This chain is Acidic phospholipase A2 inhibitor chain HPD-1I, found in Vipera nikolskii (Nikolsky's adder).